A 159-amino-acid chain; its full sequence is Large ribosomal subunit protein uL10 (159 aa).

This sequence belongs to the universal ribosomal protein uL10 family. In terms of assembly, part of the ribosomal stalk of the 50S ribosomal subunit. The N-terminus interacts with L11 and the large rRNA to form the base of the stalk. The C-terminus forms an elongated spine to which L12 dimers bind in a sequential fashion forming a multimeric L10(L12)X complex.

Forms part of the ribosomal stalk, playing a central role in the interaction of the ribosome with GTP-bound translation factors. In Sulfurimonas denitrificans (strain ATCC 33889 / DSM 1251) (Thiomicrospira denitrificans (strain ATCC 33889 / DSM 1251)), this protein is Large ribosomal subunit protein uL10.